Consider the following 118-residue polypeptide: Secreted RxLR effector protein 143 (118 aa).

Residues Met-1 to Ser-18 form the signal peptide. Positions Asp-35–Gly-65 are enriched in basic and acidic residues. A disordered region spans residues Asp-35–Ile-66. The short motif at Arg-49–Arg-64 is the RxLR-dEER element.

The protein belongs to the RxLR effector family.

The protein localises to the secreted. It localises to the host cell membrane. Its function is as follows. Secreted effector that completely suppresses the host cell death induced by cell death-inducing proteins. In Plasmopara viticola (Downy mildew of grapevine), this protein is Secreted RxLR effector protein 143.